A 574-amino-acid polypeptide reads, in one-letter code: Transmembrane protein 108 (574 aa).

A helical transmembrane segment spans residues tyrosine 9–valine 29. An interaction with SH3GL2 region spans residues glutamate 31–proline 169. Disordered regions lie at residues proline 32 to phenylalanine 352 and aspartate 364 to leucine 417. Residues threonine 58–serine 86 are compositionally biased toward polar residues. The segment covering leucine 132–alanine 160 has biased composition (low complexity). Residues arginine 173 to serine 406 form an interaction with DST (isoform 1) region. Polar residues predominate over residues phenylalanine 245–leucine 271. Residues threonine 292–proline 312 show a composition bias toward low complexity. Polar residues predominate over residues proline 316 to aspartate 332. The helical transmembrane segment at isoleucine 468 to valine 488 threads the bilayer. An interaction with CYFIP2 region spans residues cysteine 489–isoleucine 574.

In terms of assembly, interacts with DST (isoform 1). Interacts with SH3GL2. Interacts (via N-terminus) with CYFIP1 and CYFIP2; the interactions associate TMEM108 with the WAVE1 complex. In terms of processing, glycosylated. Expressed in the nervous system tissues, such as hippocampus and spinal cord, is barely detectable in peripheral tissues such as heart, lung, liver, kidney and muscle. In brain, highly expressed in dentate gyrus neurons and expressed in cortex, olfactory bulb, ammon's horn, cerebellum, hypothalamus and striatum.

The protein localises to the membrane. It localises to the postsynaptic density. The protein resides in the endosome membrane. Its subcellular location is the cell projection. It is found in the axon. The protein localises to the dendrite. It localises to the early endosome. In terms of biological role, transmembrane protein required for proper cognitive functions. Involved in the development of dentate gyrus (DG) neuron circuitry, is necessary for AMPA receptors surface expression and proper excitatory postsynaptic currents of DG granule neurons. Regulates the organization and stability of the microtubule network of sensory neurons to allow axonal transport. Through the interaction with DST, mediates the docking of the dynein/dynactin motor complex to vesicle cargos for retrograde axonal transport. In hippocampal neurons, required for BDNF-dependent dendrite outgrowth. Cooperates with SH3GL2 and recruits the WAVE1 complex to facilitate actin-dependent BDNF:NTRK2 early endocytic trafficking and mediate signaling from early endosomes. This is Transmembrane protein 108 from Mus musculus (Mouse).